The chain runs to 103 residues: MSGRGKGGKGLGKGGAKRHRKVLRDNIQGITKPAIRRLARRGGVKRISGLIYEETRGVLKVFLENVIRDAVTYCEHAKRKTVTAMDVVYALKRQGRTLYGFGG.

Gly residues predominate over residues 1–14; that stretch reads MSGRGKGGKGLGKG. Positions 1-20 are disordered; sequence MSGRGKGGKGLGKGGAKRHR. An N-acetylserine modification is found at S2. Residues K6 and K13 each carry the N6-acetyl-N6-methyllysine; alternate modification. Position 17 is an N6-acetyllysine (K17). A DNA-binding region spans residues 17-21; the sequence is KRHRK. K21 carries the post-translational modification N6-methyllysine.

Belongs to the histone H4 family. The nucleosome is a histone octamer containing two molecules each of H2A, H2B, H3 and H4 assembled in one H3-H4 heterotetramer and two H2A-H2B heterodimers. The octamer wraps approximately 147 bp of DNA.

The protein localises to the nucleus. It is found in the chromosome. Functionally, core component of nucleosome. Nucleosomes wrap and compact DNA into chromatin, limiting DNA accessibility to the cellular machineries which require DNA as a template. Histones thereby play a central role in transcription regulation, DNA repair, DNA replication and chromosomal stability. DNA accessibility is regulated via a complex set of post-translational modifications of histones, also called histone code, and nucleosome remodeling. This Holothuria tubulosa (Tubular sea cucumber) protein is Histone H4.